The primary structure comprises 412 residues: Interferon-inducible GTPase 5 (412 aa).

In terms of domain architecture, IRG-type G spans 51–234 (TRLEVGVTGE…PMLVTTWEHD (184 aa)). GTP-binding positions include 60 to 67 (ESGAGKSS), 85 to 89 (TGVVE), and 215 to 217 (SNL). Ser-246 and Ser-303 each carry phosphoserine.

Belongs to the TRAFAC class dynamin-like GTPase superfamily. IRG family. In terms of assembly, interacts with PLIN2/ADRP and COX4I1/COXIV. As to expression, expressed in spermatozoa tails from the testis and epididymis, where it may be a component of the fibrous sheath (at protein level).

Its subcellular location is the cell projection. It localises to the cilium. It is found in the flagellum. The protein localises to the lipid droplet. The catalysed reaction is GTP + H2O = GDP + phosphate + H(+). In terms of biological role, required for sperm motility and therefore male fertility, via positive regulation of spermatozoa fibrous sheath formation. In Mus musculus (Mouse), this protein is Interferon-inducible GTPase 5.